The chain runs to 359 residues: Guanine nucleotide-binding protein subunit alpha-11 (359 aa).

S-palmitoyl cysteine attachment occurs at residues Cys-9 and Cys-10. One can recognise a G-alpha domain in the interval 38-359; the sequence is RELKLLLLGT…QHNLKEYNLV (322 aa). A G1 motif region spans residues 41–54; the sequence is KLLLLGTGESGKST. GTP contacts are provided by residues 46–53 and 180–183; these read GTGESGKS and LRVR. Residue Ser-53 participates in Mg(2+) binding. The G2 motif stretch occupies residues 178-186; the sequence is DVLRVRVPT. Thr-186 provides a ligand contact to Mg(2+). A G3 motif region spans residues 201–210; sequence FRMVDVGGQR. Residues 270 to 277 are G4 motif; it reads ILFLNKKD. GTP contacts are provided by residues 274 to 277 and Ala-331; that span reads NKKD. The tract at residues 329–334 is G5 motif; that stretch reads TCATDT.

The protein belongs to the G-alpha family. G(q) subfamily. In terms of assembly, g proteins are composed of 3 units; alpha, beta and gamma. The alpha chain contains the guanine nucleotide binding site.

The protein localises to the cell membrane. The protein resides in the cytoplasm. The catalysed reaction is GTP + H2O = GDP + phosphate + H(+). Functionally, guanine nucleotide-binding proteins (G proteins) function as transducers downstream of G protein-coupled receptors (GPCRs) in numerous signaling cascades. The alpha chain contains the guanine nucleotide binding site and alternates between an active, GTP-bound state and an inactive, GDP-bound state. Signaling by an activated GPCR promotes GDP release and GTP binding. The alpha subunit has a low GTPase activity that converts bound GTP to GDP, thereby terminating the signal. Both GDP release and GTP hydrolysis are modulated by numerous regulatory proteins. Signaling is mediated via phospholipase C-beta-dependent inositol lipid hydrolysis for signal propagation: activates phospholipase C-beta: following GPCR activation, GNA11 activates PLC-beta (PLCB1, PLCB2, PLCB3 or PLCB4), leading to production of diacylglycerol (DAG) and inositol 1,4,5-trisphosphate (IP3). The polypeptide is Guanine nucleotide-binding protein subunit alpha-11 (gna11) (Xenopus laevis (African clawed frog)).